The sequence spans 496 residues: Lysine--tRNA ligase (496 aa).

Glu-405 and Glu-412 together coordinate Mg(2+).

This sequence belongs to the class-II aminoacyl-tRNA synthetase family. Homodimer. Mg(2+) is required as a cofactor.

The protein localises to the cytoplasm. The enzyme catalyses tRNA(Lys) + L-lysine + ATP = L-lysyl-tRNA(Lys) + AMP + diphosphate. The sequence is that of Lysine--tRNA ligase from Vesicomyosocius okutanii subsp. Calyptogena okutanii (strain HA).